We begin with the raw amino-acid sequence, 290 residues long: Xylanase inhibitor protein 2 (290 aa).

A signal peptide spans 1-27; that stretch reads MGLVHALLPFAAAAALLLLAAPPPATA. Residues 30-290 enclose the GH18 domain; the sequence is PGLAVYWGRH…DKKANYTGEG (261 aa). An intrachain disulfide couples Cys49 to Cys89. Asn112 is a glycosylation site (N-linked (GlcNAc...) asparagine). Cys187 and Cys216 are disulfide-bonded. N-linked (GlcNAc...) asparagine glycosylation occurs at Asn285.

It belongs to the glycosyl hydrolase 18 family. Xylanase inhibitor subfamily. As to quaternary structure, binds to fungal GH10 xylanases.

The protein resides in the secreted. Fungal xylanase inhibitor. Possesses competitive inhibiting activity against several fungal endo-1,4-beta-D-xylanases belonging to glycoside hydrolase family 10 (GH10) and family 11 (GH11). May function in plant defense against secreted fungal pathogen xylanases. Is similar to class III chitinases, but does not exhibit chitinase activity. This is Xylanase inhibitor protein 2 from Oryza sativa subsp. japonica (Rice).